A 149-amino-acid polypeptide reads, in one-letter code: MRIMGLDVGDKTIGVAVSDLMGWTAQGVATIRRSRLAADLEHLRELVKTYEVERIVCGLPRNMNGTYGPRAEGIRKFGSLVEKKLNIPVDYWDERLTTVAAQKTLIAGDLSRAKRKQVVDKLAAVLILQNYMDAKAHLAAKEQSKETSE.

This sequence belongs to the YqgF nuclease family.

It is found in the cytoplasm. Its function is as follows. Could be a nuclease involved in processing of the 5'-end of pre-16S rRNA. The chain is Putative pre-16S rRNA nuclease from Heliobacterium modesticaldum (strain ATCC 51547 / Ice1).